Here is a 359-residue protein sequence, read N- to C-terminus: 3-dehydroquinate synthase (359 aa).

NAD(+) is bound by residues 71–76, 105–109, 129–130, K142, and K151; these read DGEAYK, GVVGD, and TT. The Zn(2+) site is built by E184, H247, and H264.

Belongs to the sugar phosphate cyclases superfamily. Dehydroquinate synthase family. Requires Co(2+) as cofactor. Zn(2+) serves as cofactor. It depends on NAD(+) as a cofactor.

It is found in the cytoplasm. It catalyses the reaction 7-phospho-2-dehydro-3-deoxy-D-arabino-heptonate = 3-dehydroquinate + phosphate. It functions in the pathway metabolic intermediate biosynthesis; chorismate biosynthesis; chorismate from D-erythrose 4-phosphate and phosphoenolpyruvate: step 2/7. Its function is as follows. Catalyzes the conversion of 3-deoxy-D-arabino-heptulosonate 7-phosphate (DAHP) to dehydroquinate (DHQ). This is 3-dehydroquinate synthase from Burkholderia cenocepacia (strain HI2424).